A 514-amino-acid polypeptide reads, in one-letter code: Type-2 serine--tRNA ligase (514 aa).

Residue A313 participates in L-serine binding. C315 lines the Zn(2+) pocket. R344 serves as a coordination point for L-serine. ATP-binding positions include R344–E346 and R355–V356. R361–E363 lines the L-serine pocket. E363 and C470 together coordinate Zn(2+). R477 provides a ligand contact to ATP.

Belongs to the class-II aminoacyl-tRNA synthetase family. Type-2 seryl-tRNA synthetase subfamily. In terms of assembly, homodimer. Zn(2+) serves as cofactor.

The protein localises to the cytoplasm. The catalysed reaction is tRNA(Ser) + L-serine + ATP = L-seryl-tRNA(Ser) + AMP + diphosphate + H(+). It catalyses the reaction tRNA(Sec) + L-serine + ATP = L-seryl-tRNA(Sec) + AMP + diphosphate + H(+). It functions in the pathway aminoacyl-tRNA biosynthesis; selenocysteinyl-tRNA(Sec) biosynthesis; L-seryl-tRNA(Sec) from L-serine and tRNA(Sec): step 1/1. Its function is as follows. Catalyzes the attachment of serine to tRNA(Ser). Is also able to aminoacylate tRNA(Sec) with serine, to form the misacylated tRNA L-seryl-tRNA(Sec), which will be further converted into selenocysteinyl-tRNA(Sec). The polypeptide is Type-2 serine--tRNA ligase (Methanococcus maripaludis (strain C7 / ATCC BAA-1331)).